The chain runs to 223 residues: Adenylate kinase (223 aa).

10 to 15 (GAGKGT) contributes to the ATP binding site. The interval 30-59 (STGDILRQAVKEGTEVGKIAGELMKAGKLI) is NMP. AMP contacts are provided by residues threonine 31, arginine 36, 57–59 (KLI), 85–88 (GFPR), and glutamine 92. An LID region spans residues 126–163 (GRYVCAQCGAGYHDEFKRPHKEGVCDICGSTEFKRRPD). Residue arginine 127 participates in ATP binding. Positions 130, 133, 150, and 153 each coordinate Zn(2+). Residues arginine 160 and arginine 172 each coordinate AMP. Leucine 200 is an ATP binding site.

The protein belongs to the adenylate kinase family. As to quaternary structure, monomer.

It localises to the cytoplasm. The catalysed reaction is AMP + ATP = 2 ADP. Its pathway is purine metabolism; AMP biosynthesis via salvage pathway; AMP from ADP: step 1/1. In terms of biological role, catalyzes the reversible transfer of the terminal phosphate group between ATP and AMP. Plays an important role in cellular energy homeostasis and in adenine nucleotide metabolism. This Zymomonas mobilis subsp. mobilis (strain ATCC 31821 / ZM4 / CP4) protein is Adenylate kinase.